Reading from the N-terminus, the 336-residue chain is Holliday junction branch migration complex subunit RuvB (336 aa).

The large ATPase domain (RuvB-L) stretch occupies residues 4 to 185 (MDERLLSGES…FGVLSRLEYY (182 aa)). ATP is bound by residues L24, R25, G66, K69, T70, T71, 132–134 (EDF), R175, Y185, and R222. T70 provides a ligand contact to Mg(2+). Positions 186-256 (TVDQLSAIVE…ITQMALELLQ (71 aa)) are small ATPAse domain (RuvB-S). The tract at residues 259-336 (KLGLDHIDHK…EHFGMEMPKV (78 aa)) is head domain (RuvB-H). Positions 314 and 319 each coordinate DNA.

Belongs to the RuvB family. As to quaternary structure, homohexamer. Forms an RuvA(8)-RuvB(12)-Holliday junction (HJ) complex. HJ DNA is sandwiched between 2 RuvA tetramers; dsDNA enters through RuvA and exits via RuvB. An RuvB hexamer assembles on each DNA strand where it exits the tetramer. Each RuvB hexamer is contacted by two RuvA subunits (via domain III) on 2 adjacent RuvB subunits; this complex drives branch migration. In the full resolvosome a probable DNA-RuvA(4)-RuvB(12)-RuvC(2) complex forms which resolves the HJ.

Its subcellular location is the cytoplasm. It catalyses the reaction ATP + H2O = ADP + phosphate + H(+). Its function is as follows. The RuvA-RuvB-RuvC complex processes Holliday junction (HJ) DNA during genetic recombination and DNA repair, while the RuvA-RuvB complex plays an important role in the rescue of blocked DNA replication forks via replication fork reversal (RFR). RuvA specifically binds to HJ cruciform DNA, conferring on it an open structure. The RuvB hexamer acts as an ATP-dependent pump, pulling dsDNA into and through the RuvAB complex. RuvB forms 2 homohexamers on either side of HJ DNA bound by 1 or 2 RuvA tetramers; 4 subunits per hexamer contact DNA at a time. Coordinated motions by a converter formed by DNA-disengaged RuvB subunits stimulates ATP hydrolysis and nucleotide exchange. Immobilization of the converter enables RuvB to convert the ATP-contained energy into a lever motion, pulling 2 nucleotides of DNA out of the RuvA tetramer per ATP hydrolyzed, thus driving DNA branch migration. The RuvB motors rotate together with the DNA substrate, which together with the progressing nucleotide cycle form the mechanistic basis for DNA recombination by continuous HJ branch migration. Branch migration allows RuvC to scan DNA until it finds its consensus sequence, where it cleaves and resolves cruciform DNA. The chain is Holliday junction branch migration complex subunit RuvB from Bacillus thuringiensis (strain Al Hakam).